The chain runs to 428 residues: Light-independent protochlorophyllide reductase subunit N (428 aa).

The [4Fe-4S] cluster site is built by Cys29, Cys54, and Cys115.

This sequence belongs to the BchN/ChlN family. In terms of assembly, protochlorophyllide reductase is composed of three subunits; BchL, BchN and BchB. Forms a heterotetramer of two BchB and two BchN subunits. The cofactor is [4Fe-4S] cluster.

The enzyme catalyses chlorophyllide a + oxidized 2[4Fe-4S]-[ferredoxin] + 2 ADP + 2 phosphate = protochlorophyllide a + reduced 2[4Fe-4S]-[ferredoxin] + 2 ATP + 2 H2O. It functions in the pathway porphyrin-containing compound metabolism; bacteriochlorophyll biosynthesis (light-independent). Its function is as follows. Component of the dark-operative protochlorophyllide reductase (DPOR) that uses Mg-ATP and reduced ferredoxin to reduce ring D of protochlorophyllide (Pchlide) to form chlorophyllide a (Chlide). This reaction is light-independent. The NB-protein (BchN-BchB) is the catalytic component of the complex. This Roseobacter denitrificans (strain ATCC 33942 / OCh 114) (Erythrobacter sp. (strain OCh 114)) protein is Light-independent protochlorophyllide reductase subunit N.